The primary structure comprises 86 residues: MNFQPLGKRVLVKRVEETKTTASGIIIPDNAKEKPLMGEVVAVSKEITDIANGDKIVFAKYGGTEIKLDNNEYLVLNLDDILGILK.

Belongs to the GroES chaperonin family. Heptamer of 7 subunits arranged in a ring. Interacts with the chaperonin GroEL.

The protein localises to the cytoplasm. Functionally, together with the chaperonin GroEL, plays an essential role in assisting protein folding. The GroEL-GroES system forms a nano-cage that allows encapsulation of the non-native substrate proteins and provides a physical environment optimized to promote and accelerate protein folding. GroES binds to the apical surface of the GroEL ring, thereby capping the opening of the GroEL channel. This Campylobacter jejuni subsp. jejuni serotype O:6 (strain 81116 / NCTC 11828) protein is Co-chaperonin GroES.